A 366-amino-acid polypeptide reads, in one-letter code: Anhydro-N-acetylmuramic acid kinase (366 aa).

Residue 10–17 (GTSLDGVD) participates in ATP binding.

The protein belongs to the anhydro-N-acetylmuramic acid kinase family.

It catalyses the reaction 1,6-anhydro-N-acetyl-beta-muramate + ATP + H2O = N-acetyl-D-muramate 6-phosphate + ADP + H(+). It functions in the pathway amino-sugar metabolism; 1,6-anhydro-N-acetylmuramate degradation. It participates in cell wall biogenesis; peptidoglycan recycling. Catalyzes the specific phosphorylation of 1,6-anhydro-N-acetylmuramic acid (anhMurNAc) with the simultaneous cleavage of the 1,6-anhydro ring, generating MurNAc-6-P. Is required for the utilization of anhMurNAc either imported from the medium or derived from its own cell wall murein, and thus plays a role in cell wall recycling. The protein is Anhydro-N-acetylmuramic acid kinase of Nitrobacter winogradskyi (strain ATCC 25391 / DSM 10237 / CIP 104748 / NCIMB 11846 / Nb-255).